Here is a 514-residue protein sequence, read N- to C-terminus: GMP synthase [glutamine-hydrolyzing] (514 aa).

A Glutamine amidotransferase type-1 domain is found at 9-199 (KIIVLDFGSQ…ALNVCGCKGD (191 aa)). The Nucleophile role is filled by cysteine 86. Active-site residues include histidine 173 and glutamate 175. The GMPS ATP-PPase domain occupies 200 to 389 (WTMENFSEVE…LGMPDAIVWR (190 aa)). 227 to 233 (SGGVDSS) contacts ATP.

In terms of assembly, homodimer.

It catalyses the reaction XMP + L-glutamine + ATP + H2O = GMP + L-glutamate + AMP + diphosphate + 2 H(+). Its pathway is purine metabolism; GMP biosynthesis; GMP from XMP (L-Gln route): step 1/1. Functionally, catalyzes the synthesis of GMP from XMP. This chain is GMP synthase [glutamine-hydrolyzing], found in Listeria monocytogenes serotype 4b (strain F2365).